A 901-amino-acid polypeptide reads, in one-letter code: Dipeptidyl-aminopeptidase B (901 aa).

Positions 1–22 (MSSPRPSTSSTSSDSGLSVDTT) are enriched in low complexity. Positions 1–67 (MSSPRPSTSS…EPFLPSAKKQ (67 aa)) are disordered. The Cytoplasmic segment spans residues 1–76 (MSSPRPSTSS…QAASGSRTSR (76 aa)). The chain crosses the membrane as a helical; Signal-anchor for type II membrane protein span at residues 77–97 (LIWGLVILCVAGWLWGLVLFV). Residues 98-901 (TQNRSAQQSV…VKRSLPMLVN (804 aa)) lie on the Vacuolar side of the membrane. N-linked (GlcNAc...) asparagine glycans are attached at residues asparagine 334 and asparagine 625. The active-site Charge relay system is the serine 739. N-linked (GlcNAc...) asparagine glycosylation is present at asparagine 793. Active-site charge relay system residues include aspartate 816 and histidine 849.

Belongs to the peptidase S9B family.

It localises to the vacuole membrane. It carries out the reaction Release of an N-terminal dipeptide, Xaa-Yaa-|-Zaa-, from a polypeptide, preferentially when Yaa is Pro, provided Zaa is neither Pro nor hydroxyproline.. In terms of biological role, type IV dipeptidyl-peptidase which removes N-terminal dipeptides sequentially from polypeptides having unsubstituted N-termini provided that the penultimate residue is proline. This chain is Dipeptidyl-aminopeptidase B (dapB), found in Aspergillus niger.